The primary structure comprises 166 residues: MEMSNAQRLILSNQYNLMSQLDPNNAAKYKRLQTIVERGYELQMRELNKDFGCLSEAECREIIDIMEMYHAMQESNNMLDAEERSKVDQRRLQFLGFDIATEAQQVHYVRFLVDSEGLYPQFDKADHHFNSQMPMLDKYRRMLQTWRNCPRQYHLCENELAQIFSA.

Belongs to the UPF0304 family.

This chain is UPF0304 protein VP0990, found in Vibrio parahaemolyticus serotype O3:K6 (strain RIMD 2210633).